The primary structure comprises 326 residues: 2-dehydropantoate 2-reductase (326 aa).

Residues 7–12 (GAGAIG) and Asn103 each bind NADP(+). Asn103 contacts substrate. Lys205 functions as the Proton donor in the catalytic mechanism. Substrate-binding residues include Asn209, Asn213, and Ser274. NADP(+) is bound at residue Glu286.

This sequence belongs to the ketopantoate reductase family.

The protein localises to the cytoplasm. It catalyses the reaction (R)-pantoate + NADP(+) = 2-dehydropantoate + NADPH + H(+). Its pathway is cofactor biosynthesis; (R)-pantothenate biosynthesis; (R)-pantoate from 3-methyl-2-oxobutanoate: step 2/2. In terms of biological role, catalyzes the NADPH-dependent reduction of ketopantoate into pantoic acid. In Mesorhizobium japonicum (strain LMG 29417 / CECT 9101 / MAFF 303099) (Mesorhizobium loti (strain MAFF 303099)), this protein is 2-dehydropantoate 2-reductase.